A 470-amino-acid chain; its full sequence is Uronate isomerase (470 aa).

This sequence belongs to the metallo-dependent hydrolases superfamily. Uronate isomerase family.

The catalysed reaction is D-glucuronate = D-fructuronate. It carries out the reaction aldehydo-D-galacturonate = keto-D-tagaturonate. Its pathway is carbohydrate metabolism; pentose and glucuronate interconversion. The protein is Uronate isomerase of Salmonella agona (strain SL483).